Consider the following 177-residue polypeptide: Large ribosomal subunit protein uL6 (177 aa).

This sequence belongs to the universal ribosomal protein uL6 family. As to quaternary structure, part of the 50S ribosomal subunit.

Its function is as follows. This protein binds to the 23S rRNA, and is important in its secondary structure. It is located near the subunit interface in the base of the L7/L12 stalk, and near the tRNA binding site of the peptidyltransferase center. The chain is Large ribosomal subunit protein uL6 from Stutzerimonas stutzeri (strain A1501) (Pseudomonas stutzeri).